Consider the following 99-residue polypeptide: Small ribosomal subunit protein cS23 (99 aa).

The protein belongs to the chloroplast-specific ribosomal protein cS23 family. In terms of assembly, part of the 30S ribosomal subunit.

It localises to the plastid. The protein resides in the chloroplast. In terms of biological role, probably a ribosomal protein or a ribosome-associated protein. This Gracilaria tenuistipitata var. liui (Red alga) protein is Small ribosomal subunit protein cS23.